The chain runs to 273 residues: 4-hydroxy-tetrahydrodipicolinate reductase (273 aa).

NAD(+)-binding positions include 12–17 and E38; that span reads GAGGRM. An NADP(+)-binding site is contributed by R39. NAD(+) is bound by residues 102–104 and 126–129; these read GTT and AANF. H159 serves as the catalytic Proton donor/acceptor. H160 provides a ligand contact to (S)-2,3,4,5-tetrahydrodipicolinate. The active-site Proton donor is K163. 169–170 contacts (S)-2,3,4,5-tetrahydrodipicolinate; sequence GT.

This sequence belongs to the DapB family. Homotetramer.

The protein resides in the cytoplasm. It catalyses the reaction (S)-2,3,4,5-tetrahydrodipicolinate + NAD(+) + H2O = (2S,4S)-4-hydroxy-2,3,4,5-tetrahydrodipicolinate + NADH + H(+). It carries out the reaction (S)-2,3,4,5-tetrahydrodipicolinate + NADP(+) + H2O = (2S,4S)-4-hydroxy-2,3,4,5-tetrahydrodipicolinate + NADPH + H(+). Its pathway is amino-acid biosynthesis; L-lysine biosynthesis via DAP pathway; (S)-tetrahydrodipicolinate from L-aspartate: step 4/4. In terms of biological role, catalyzes the conversion of 4-hydroxy-tetrahydrodipicolinate (HTPA) to tetrahydrodipicolinate. This chain is 4-hydroxy-tetrahydrodipicolinate reductase, found in Salmonella dublin (strain CT_02021853).